A 751-amino-acid polypeptide reads, in one-letter code: E3 ubiquitin-protein ligase SMURF2 (751 aa).

Residues 1-119 (MSNQGSRRNG…TGYQRLDLCK (119 aa)) form the C2 domain. The 34-residue stretch at 157 to 190 (NDLPDGWEERRTASGRIQYLNHITRTTQWERPTR) folds into the WW 1 domain. Over residues 214-226 (GTNGASCGQTSDP) the composition is skewed to polar residues. A disordered region spans residues 214–236 (GTNGASCGQTSDPRISERRVRSQ). WW domains follow at residues 251–284 (PDLPEGYEQRTTQQGQVYFLHTQTGVSTWHDPRV) and 297–330 (GPLPPGWEIRNTATGRVYFVDHNNRTTQFTDPRL). Residues 417–751 (RPKDLWKRLM…IEETCGFAVE (335 aa)) enclose the HECT domain. C719 functions as the Glycyl thioester intermediate in the catalytic mechanism.

Its subcellular location is the nucleus. The protein localises to the cytoplasm. It is found in the cell membrane. It localises to the membrane raft. It catalyses the reaction S-ubiquitinyl-[E2 ubiquitin-conjugating enzyme]-L-cysteine + [acceptor protein]-L-lysine = [E2 ubiquitin-conjugating enzyme]-L-cysteine + N(6)-ubiquitinyl-[acceptor protein]-L-lysine.. It participates in protein modification; protein ubiquitination. In terms of biological role, E3 ubiquitin-protein ligase which accepts ubiquitin from an E2 ubiquitin-conjugating enzyme in the form of a thioester and then directly transfers the ubiquitin to targeted substrates. This chain is E3 ubiquitin-protein ligase SMURF2 (smurf2), found in Xenopus laevis (African clawed frog).